The primary structure comprises 348 residues: Flagellar P-ring protein (348 aa).

Positions 1 to 16 (MRVLTIFLLFMTSIFA) are cleaved as a signal peptide.

Belongs to the FlgI family. In terms of assembly, the basal body constitutes a major portion of the flagellar organelle and consists of four rings (L,P,S, and M) mounted on a central rod.

It localises to the periplasm. It is found in the bacterial flagellum basal body. Assembles around the rod to form the L-ring and probably protects the motor/basal body from shearing forces during rotation. This is Flagellar P-ring protein from Campylobacter jejuni subsp. doylei (strain ATCC BAA-1458 / RM4099 / 269.97).